A 478-amino-acid polypeptide reads, in one-letter code: MTTDWNFEATYLELRDIFYDRGPIHPVDNPTLVLFNDALAASLGLDAQSLKQDIDLLAGNRQTETSFSQAYAGHQFGNLTMLGDGRALMLGEHVTPNGKRVDVQLKGSGPTEYSRGGDGRAALGPMVREFIISEAMHALGIPTNRALAVIQTGEAIMRQGPKHGAILTRVASSHLRVGTFQFAAGAGSIDDVIALTEVAIKRHDPDLIDAPNRYEQFLGRVVERQARLIANWQLVGFIHGVMNTDNMFISGEGLDYGPCAFMDTYHPETVFSSIDREGRYAYANQPYIGSWNLARLAETLLPLLGETKEEAVDVANKQLTRYTELYKEAYFTGLAHKIGLFVRKDGDDELTDELLRLMMETEADYTNTFRSLTLGEIESLPFATRKDGKVWLGAWRKRLNGQGLPDEDVSRIMRQYNPAVIPRNHHVEKAIQAAERGDFGPTEAILTILRDPYNYDQSSEYVSAGPPRTYPYQTFCGT.

Residues G83, G85, R86, K106, D118, G119, R169, and R176 each contribute to the ATP site. D245 (proton acceptor) is an active-site residue. Mg(2+)-binding residues include N246 and D255. D255 contacts ATP.

It belongs to the SELO family. It depends on Mg(2+) as a cofactor. Mn(2+) is required as a cofactor.

It carries out the reaction L-seryl-[protein] + ATP = 3-O-(5'-adenylyl)-L-seryl-[protein] + diphosphate. The enzyme catalyses L-threonyl-[protein] + ATP = 3-O-(5'-adenylyl)-L-threonyl-[protein] + diphosphate. The catalysed reaction is L-tyrosyl-[protein] + ATP = O-(5'-adenylyl)-L-tyrosyl-[protein] + diphosphate. It catalyses the reaction L-histidyl-[protein] + UTP = N(tele)-(5'-uridylyl)-L-histidyl-[protein] + diphosphate. It carries out the reaction L-seryl-[protein] + UTP = O-(5'-uridylyl)-L-seryl-[protein] + diphosphate. The enzyme catalyses L-tyrosyl-[protein] + UTP = O-(5'-uridylyl)-L-tyrosyl-[protein] + diphosphate. Its function is as follows. Nucleotidyltransferase involved in the post-translational modification of proteins. It can catalyze the addition of adenosine monophosphate (AMP) or uridine monophosphate (UMP) to a protein, resulting in modifications known as AMPylation and UMPylation. The polypeptide is Protein nucleotidyltransferase YdiU (Exiguobacterium sp. (strain ATCC BAA-1283 / AT1b)).